The primary structure comprises 147 residues: MKVIFLQDVKGQGKKDEIKEISDGYARNFLIPKGLVKLATEGSVKTVKNRKIVQEQEKDLAIAETKQLKTLLEEIILKFKLQINEGKAFHSISNQDIVDQLKNSHKIDLDKRKFVNFKNLNQIGLHYIVIKLGFGIEAKLKVEIQGV.

It belongs to the bacterial ribosomal protein bL9 family.

In terms of biological role, binds to the 23S rRNA. The sequence is that of Large ribosomal subunit protein bL9 from Mesoplasma florum (strain ATCC 33453 / NBRC 100688 / NCTC 11704 / L1) (Acholeplasma florum).